We begin with the raw amino-acid sequence, 128 residues long: Large ribosomal subunit protein bL12 (128 aa).

This sequence belongs to the bacterial ribosomal protein bL12 family. In terms of assembly, homodimer. Part of the ribosomal stalk of the 50S ribosomal subunit. Forms a multimeric L10(L12)X complex, where L10 forms an elongated spine to which 2 to 4 L12 dimers bind in a sequential fashion. Binds GTP-bound translation factors.

Its function is as follows. Forms part of the ribosomal stalk which helps the ribosome interact with GTP-bound translation factors. Is thus essential for accurate translation. The sequence is that of Large ribosomal subunit protein bL12 from Corynebacterium glutamicum (strain R).